The following is a 394-amino-acid chain: NAD(P)H-quinone oxidoreductase subunit H (394 aa).

Belongs to the complex I 49 kDa subunit family. In terms of assembly, NDH-1 can be composed of about 15 different subunits; different subcomplexes with different compositions have been identified which probably have different functions.

The protein resides in the cellular thylakoid membrane. It carries out the reaction a plastoquinone + NADH + (n+1) H(+)(in) = a plastoquinol + NAD(+) + n H(+)(out). The enzyme catalyses a plastoquinone + NADPH + (n+1) H(+)(in) = a plastoquinol + NADP(+) + n H(+)(out). Functionally, NDH-1 shuttles electrons from an unknown electron donor, via FMN and iron-sulfur (Fe-S) centers, to quinones in the respiratory and/or the photosynthetic chain. The immediate electron acceptor for the enzyme in this species is believed to be plastoquinone. Couples the redox reaction to proton translocation, and thus conserves the redox energy in a proton gradient. Cyanobacterial NDH-1 also plays a role in inorganic carbon-concentration. This is NAD(P)H-quinone oxidoreductase subunit H from Synechococcus sp. (strain RCC307).